A 123-amino-acid chain; its full sequence is ATP synthase epsilon chain (123 aa).

This sequence belongs to the ATPase epsilon chain family. As to quaternary structure, F-type ATPases have 2 components, CF(1) - the catalytic core - and CF(0) - the membrane proton channel. CF(1) has five subunits: alpha(3), beta(3), gamma(1), delta(1), epsilon(1). CF(0) has three main subunits: a, b and c.

The protein resides in the cell membrane. In terms of biological role, produces ATP from ADP in the presence of a proton gradient across the membrane. This is ATP synthase epsilon chain from Corynebacterium diphtheriae (strain ATCC 700971 / NCTC 13129 / Biotype gravis).